The sequence spans 330 residues: MAEEACQVRRMKLGSQGLEVSAQGLGCMGLSDFYGAPTPETNAVALLRHAINAGVTFLDTSDIYGPETNELLLGKALKDGLRDKVELATKFGITASEDGKFGFRGDPEYVRIACEASLKRLGVTCIDLYYQHRIDTTLPIEITIGELKKLVEEGKIKYIGLSEASASTIRRAHAVHPITAVQIEWSLWSRDVEEDIIPTCRELGIGIVAYSPLGRGFLGLPRFQQENLENNKILYEKVQAMATKKSCTPAQLALAWVHHQGDDVCPIPGTSKIQNLNQNIGALSVKLTPEEMVELEAIAQPDFVKGERYDNNMVTYKDSETPPLSSWKAR.

Tyr-64 acts as the Proton donor in catalysis. His-132 is a substrate binding site. NADP(+) is bound at residue 211–221 (SPLGRGFLGLP).

Belongs to the aldo/keto reductase family.

The sequence is that of Probable aldo-keto reductase 6 from Arabidopsis thaliana (Mouse-ear cress).